The following is a 175-amino-acid chain: NAD(P)H-quinone oxidoreductase subunit J (175 aa).

This sequence belongs to the complex I 30 kDa subunit family. NDH-1 can be composed of about 15 different subunits; different subcomplexes with different compositions have been identified which probably have different functions.

It is found in the cellular thylakoid membrane. It carries out the reaction a plastoquinone + NADH + (n+1) H(+)(in) = a plastoquinol + NAD(+) + n H(+)(out). The enzyme catalyses a plastoquinone + NADPH + (n+1) H(+)(in) = a plastoquinol + NADP(+) + n H(+)(out). Functionally, NDH-1 shuttles electrons from an unknown electron donor, via FMN and iron-sulfur (Fe-S) centers, to quinones in the respiratory and/or the photosynthetic chain. The immediate electron acceptor for the enzyme in this species is believed to be plastoquinone. Couples the redox reaction to proton translocation, and thus conserves the redox energy in a proton gradient. Cyanobacterial NDH-1 also plays a role in inorganic carbon-concentration. The polypeptide is NAD(P)H-quinone oxidoreductase subunit J (Nostoc sp. (strain PCC 7120 / SAG 25.82 / UTEX 2576)).